Reading from the N-terminus, the 313-residue chain is tRNA dimethylallyltransferase (313 aa).

ATP is bound at residue 17–24; sequence GPTASGKT. Residue 19-24 coordinates substrate; the sequence is TASGKT. Interaction with substrate tRNA regions lie at residues 42-45, 166-170, and 247-252; these read DSAL, QRLSR, and RCVGYR.

This sequence belongs to the IPP transferase family. As to quaternary structure, monomer. It depends on Mg(2+) as a cofactor.

The enzyme catalyses adenosine(37) in tRNA + dimethylallyl diphosphate = N(6)-dimethylallyladenosine(37) in tRNA + diphosphate. Its function is as follows. Catalyzes the transfer of a dimethylallyl group onto the adenine at position 37 in tRNAs that read codons beginning with uridine, leading to the formation of N6-(dimethylallyl)adenosine (i(6)A). The sequence is that of tRNA dimethylallyltransferase from Serratia proteamaculans (strain 568).